Consider the following 449-residue polypeptide: Tubulin alpha-8 chain (449 aa).

An MREC motif motif is present at residues 1–4 (MREC). Residues glutamine 11, glutamate 71, serine 140, glycine 144, threonine 145, threonine 179, asparagine 206, and asparagine 228 each coordinate GTP. Glutamate 71 contacts Mg(2+). Residue glutamate 254 is part of the active site.

This sequence belongs to the tubulin family. In terms of assembly, dimer of alpha and beta chains. A typical microtubule is a hollow water-filled tube with an outer diameter of 25 nm and an inner diameter of 15 nM. Alpha-beta heterodimers associate head-to-tail to form protofilaments running lengthwise along the microtubule wall with the beta-tubulin subunit facing the microtubule plus end conferring a structural polarity. Microtubules usually have 13 protofilaments but different protofilament numbers can be found in some organisms and specialized cells. The cofactor is Mg(2+). Some glutamate residues at the C-terminus are polyglycylated, resulting in polyglycine chains on the gamma-carboxyl group. Glycylation is mainly limited to tubulin incorporated into axonemes (cilia and flagella) whereas glutamylation is prevalent in neuronal cells, centrioles, axonemes, and the mitotic spindle. Both modifications can coexist on the same protein on adjacent residues, and lowering polyglycylation levels increases polyglutamylation, and reciprocally. Cilia and flagella glycylation is required for their stability and maintenance. Flagella glycylation controls sperm motility. Post-translationally, some glutamate residues at the C-terminus are polyglutamylated, resulting in polyglutamate chains on the gamma-carboxyl group. Polyglutamylation plays a key role in microtubule severing by spastin (SPAST). SPAST preferentially recognizes and acts on microtubules decorated with short polyglutamate tails: severing activity by SPAST increases as the number of glutamates per tubulin rises from one to eight, but decreases beyond this glutamylation threshold. Glutamylation is also involved in cilia motility. In terms of processing, the C-terminal phenylalanine residue is cleaved by MATCAP1/KIAA0895L.

Its subcellular location is the cytoplasm. It is found in the cytoskeleton. It catalyses the reaction GTP + H2O = GDP + phosphate + H(+). Functionally, tubulin is the major constituent of microtubules, a cylinder consisting of laterally associated linear protofilaments composed of alpha- and beta-tubulin heterodimers. Microtubules grow by the addition of GTP-tubulin dimers to the microtubule end, where a stabilizing cap forms. Below the cap, tubulin dimers are in GDP-bound state, owing to GTPase activity of alpha-tubulin. The chain is Tubulin alpha-8 chain (TUBA8) from Bos taurus (Bovine).